A 687-amino-acid polypeptide reads, in one-letter code: Ferric transport system permease protein FbpB (687 aa).

A run of 19 helical transmembrane segments spans residues 10–30 (LFESSHFWILLSLIAFIALPS), 50–70 (GWSSVNLTILWFLPLIGFWLL), 85–105 (LGLISFILLFAFISATIYKVS), 106–126 (MGYSVIVLIATLTALATFAFA), 141–161 (LLSIILLIFFFIVYPTVAIFI), 192–212 (LFLSGFVGIVSTVFGLAFALY), 226–246 (IFSILPIVTPPFVVGLGVTLM), 271–291 (GFNGIAIAQILAFAPISFMIL), 318–338 (YNIIFPLLRPALANSFLIVFI), 347–367 (PLVLGGSFDVIATQIYFYIAG), 378–398 (LGSMLLIFSLLIFIVQYMWIG), 425–445 (IIVMLGFWVVFNFALYGSIFY), 450–472 (VNWGVDYTLTLNNYAMLFGQGLS), 484–504 (IYAGIAAPLTALFGLLIAYIV), 517–537 (FLTMLCFAVPGTVAGVSYILA), 538–558 (FNDAPMYITGTGIIIIISMVM), 594–614 (IWFIVFPLLKPALLSALVTSF), 620–640 (TVSAIVFLVTADTRVATAYIL), and 649–669 (GVAIAYGSILIVVMMAIILFF). An ABC transmembrane type-1 1 domain is found at 188 to 393 (ISNSLFLSGF…IFSLLIFIVQ (206 aa)). The ABC transmembrane type-1 2 domain maps to 479–669 (LINTMIYAGI…VVMMAIILFF (191 aa)).

Belongs to the binding-protein-dependent transport system permease family. FbpB subfamily. As to quaternary structure, the complex is composed of two ATP-binding proteins (FbpC), two transmembrane proteins (FbpB) and a solute-binding protein (FbpA).

The protein localises to the cell inner membrane. Functionally, part of the ABC transporter complex FbpABC (TC 3.A.1.10.1) involved in Fe(3+) ions import. Probably responsible for the translocation of the substrate across the membrane. The protein is Ferric transport system permease protein FbpB (fbpB) of Actinobacillus pleuropneumoniae (Haemophilus pleuropneumoniae).